Consider the following 284-residue polypeptide: Bifunctional protein FolD (284 aa).

NADP(+) contacts are provided by residues 163-165 (GRS) and S188.

The protein belongs to the tetrahydrofolate dehydrogenase/cyclohydrolase family. In terms of assembly, homodimer.

The catalysed reaction is (6R)-5,10-methylene-5,6,7,8-tetrahydrofolate + NADP(+) = (6R)-5,10-methenyltetrahydrofolate + NADPH. The enzyme catalyses (6R)-5,10-methenyltetrahydrofolate + H2O = (6R)-10-formyltetrahydrofolate + H(+). Its pathway is one-carbon metabolism; tetrahydrofolate interconversion. Catalyzes the oxidation of 5,10-methylenetetrahydrofolate to 5,10-methenyltetrahydrofolate and then the hydrolysis of 5,10-methenyltetrahydrofolate to 10-formyltetrahydrofolate. In Lactococcus lactis subsp. lactis (strain IL1403) (Streptococcus lactis), this protein is Bifunctional protein FolD.